The primary structure comprises 556 residues: Formate--tetrahydrofolate ligase (556 aa).

Position 64-71 (64-71 (TPAGEGKT)) interacts with ATP.

Belongs to the formate--tetrahydrofolate ligase family.

It catalyses the reaction (6S)-5,6,7,8-tetrahydrofolate + formate + ATP = (6R)-10-formyltetrahydrofolate + ADP + phosphate. The protein operates within one-carbon metabolism; tetrahydrofolate interconversion. This chain is Formate--tetrahydrofolate ligase, found in Haemophilus ducreyi (strain 35000HP / ATCC 700724).